The chain runs to 163 residues: Ribonuclease H (163 aa).

The RNase H type-1 domain occupies 16-157 (TTSPVEIYCD…CDSLARQAIT (142 aa)). 4 residues coordinate Mg(2+): D25, E63, D85, and D149.

This sequence belongs to the RNase H family. In terms of assembly, monomer. The cofactor is Mg(2+).

The protein localises to the cytoplasm. The enzyme catalyses Endonucleolytic cleavage to 5'-phosphomonoester.. In terms of biological role, endonuclease that specifically degrades the RNA of RNA-DNA hybrids. This is Ribonuclease H from Pelobacter propionicus (strain DSM 2379 / NBRC 103807 / OttBd1).